The sequence spans 655 residues: MGIFSIANQHIRFAVKLATAIVLALFVGFHFQLETPRWAVLTAAIVAAGPAFAAGGEPYSGAIRYRGFLRIIGTFIGCIAGLVIIIAMIRAPLLMILVCCIWAGFCTWISSLVRIENSYAWGLAGYTALIIVITIQPEPLLTPQFAVERCSEIVIGIVCAIMADLLFSPRSIKQEVDRELESLLVAQYQLMQLCIKHGDGEVVDKAWGDLVRRTTALQGMRSNLNMESSRWARANRRLKAINTLSLTLITQSCETYLIQNTRPELITDTFREFFDTPVETAQDVHKQLKRLRRVIAWTGERETPVTIYSWVAAATRYQLLKRGVISNTKINATEEEILQGEPEVKVESAERHHAMVNFWRTTLSCILGTLFWLWTGWTSGSGAMVMIAVVTSLAMRLPNPRMVAIDFIYGTLAALPLGLLYFLVIIPNTQQSMLLLCISLAVLGFFLGIEVQKRRLGSMGALASTINIIVLDNPMTFHFSQFLDSALGQIVGCVLAFTVILLVRDKSRDRTGRVLLNQFVSAAVSAMTTNVARRKENHLPALYQQLFLLMNKFPGDLPKFRLALTMIIAHQRLRDAPIPVNEDLSAFHRQMRRTADHVISARSDDKRRRYFGQLLEELEIYQEKLRIWQAPPQVTEPVHRLTGMLHKYQHALTDS.

Helical transmembrane passes span 13 to 33 (FAVKLATAIVLALFVGFHFQL), 38 to 58 (WAVLTAAIVAAGPAFAAGGEP), 69 to 89 (LRIIGTFIGCIAGLVIIIAMI), 93 to 113 (LLMILVCCIWAGFCTWISSLV), 121 to 141 (WGLAGYTALIIVITIQPEPLL), 152 to 172 (EIVIGIVCAIMADLLFSPRSI), 370 to 390 (LFWLWTGWTSGSGAMVMIAVV), 407 to 427 (FIYGTLAALPLGLLYFLVIIP), 431 to 451 (QSMLLLCISLAVLGFFLGIEV), 459 to 479 (MGALASTINIIVLDNPMTFHF), and 482 to 502 (FLDSALGQIVGCVLAFTVILL).

Belongs to the aromatic acid exporter ArAE (TC 2.A.85) family.

It localises to the cell inner membrane. Forms an efflux pump with AaeA. Could function as a metabolic relief valve, allowing to eliminate certain compounds when they accumulate to high levels in the cell. The chain is p-hydroxybenzoic acid efflux pump subunit AaeB from Escherichia coli (strain SMS-3-5 / SECEC).